The sequence spans 247 residues: Probable transcriptional regulatory protein PC1_1817 (247 aa).

The protein belongs to the TACO1 family.

Its subcellular location is the cytoplasm. The polypeptide is Probable transcriptional regulatory protein PC1_1817 (Pectobacterium carotovorum subsp. carotovorum (strain PC1)).